Here is a 1433-residue protein sequence, read N- to C-terminus: DNA-directed RNA polymerase subunit beta' (1433 aa).

Positions 66, 68, 81, and 84 each coordinate Zn(2+). Mg(2+) contacts are provided by Asp473, Asp475, and Asp477. 4 residues coordinate Zn(2+): Cys815, Cys889, Cys896, and Cys899.

Belongs to the RNA polymerase beta' chain family. As to quaternary structure, the RNAP catalytic core consists of 2 alpha, 1 beta, 1 beta' and 1 omega subunit. When a sigma factor is associated with the core the holoenzyme is formed, which can initiate transcription. The cofactor is Mg(2+). Zn(2+) serves as cofactor.

The enzyme catalyses RNA(n) + a ribonucleoside 5'-triphosphate = RNA(n+1) + diphosphate. In terms of biological role, DNA-dependent RNA polymerase catalyzes the transcription of DNA into RNA using the four ribonucleoside triphosphates as substrates. In Porphyromonas gingivalis (strain ATCC 33277 / DSM 20709 / CIP 103683 / JCM 12257 / NCTC 11834 / 2561), this protein is DNA-directed RNA polymerase subunit beta'.